Consider the following 188-residue polypeptide: GTPase KRas (188 aa).

GTP-binding positions include 10 to 18, 29 to 35, 59 to 60, and 116 to 119; these read GAGGVGKSA, VDEYDPT, AG, and NKCD. Positions 32–40 match the Effector region motif; the sequence is YDPTIEDSY. The segment at 167 to 188 is disordered; sequence KEKMSKEGKKKKKKSKTKCILM. Cysteine methyl ester is present on Cys185. A lipid anchor (S-farnesyl cysteine) is attached at Cys185. Positions 186 to 188 are cleaved as a propeptide — removed in mature form; sequence ILM.

This sequence belongs to the small GTPase superfamily. Ras family.

It is found in the cell membrane. It localises to the cytoplasm. It catalyses the reaction GTP + H2O = GDP + phosphate + H(+). Its activity is regulated as follows. Alternates between an inactive form bound to GDP and an active form bound to GTP. Activated by a guanine nucleotide-exchange factor (GEF) and inactivated by a GTPase-activating protein (GAP). In terms of biological role, ras proteins bind GDP/GTP and possess intrinsic GTPase activity. Plays an important role in the regulation of cell proliferation. The sequence is that of GTPase KRas (kras1) from Oryzias latipes (Japanese rice fish).